We begin with the raw amino-acid sequence, 487 residues long: 3-octaprenyl-4-hydroxybenzoate carboxy-lyase (487 aa).

Asn172 is a Mn(2+) binding site. Prenylated FMN-binding positions include 175–177 (IYR), 189–191 (RWL), and 194–195 (RG). Glu238 provides a ligand contact to Mn(2+). Asp287 serves as the catalytic Proton donor.

It belongs to the UbiD family. Homohexamer. The cofactor is prenylated FMN. It depends on Mn(2+) as a cofactor.

It is found in the cell membrane. It carries out the reaction a 4-hydroxy-3-(all-trans-polyprenyl)benzoate + H(+) = a 2-(all-trans-polyprenyl)phenol + CO2. Its pathway is cofactor biosynthesis; ubiquinone biosynthesis. Functionally, catalyzes the decarboxylation of 3-octaprenyl-4-hydroxy benzoate to 2-octaprenylphenol, an intermediate step in ubiquinone biosynthesis. The sequence is that of 3-octaprenyl-4-hydroxybenzoate carboxy-lyase from Dechloromonas aromatica (strain RCB).